The following is an 83-amino-acid chain: Colicin-E5 immunity protein in ColE9 (83 aa).

The polypeptide is Colicin-E5 immunity protein in ColE9 (Escherichia coli).